Consider the following 610-residue polypeptide: MALSASRVQQAEELLQRPAERQLMRSQLAAAARSINWSYALFWSISDTQPGVLTWTDGFYNGEVKTRKISNSVELTSDQLVMQRSDQLRELYEALLSGEGDRRAAPARPAGSLSPEDLGDTEWYYVVSMTYAFRPGQGLPGRSFASDEHVWLCNAHLAGSKAFPRALLAKSASIQSILCIPVMGGVLELGTTDTVPEAPDLVSRATAAFWEPQCPSSSPSGRANETGEAAADDGTFAFEELDHNNGMDDIEAMTAAGGHGQEEELRLREAEALSDDASLEHITKEIEEFYSLCDEMDLQALPLPLEDGWTVDASNFEVPCSSPQPAPPPVDRATANVAADASRAPVYGSRATSFMAWTRSSQQSSCSDDAAPAAVVPAIEEPQRLLKKVVAGGGAWESCGGATGAAQEMSGTGTKNHVMSERKRREKLNEMFLVLKSLLPSIHRVNKASILAETIAYLKELQRRVQELESSREPASRPSETTTRLITRPSRGNNESVRKEVCAGSKRKSPELGRDDVERPPVLTMDAGTSNVTVTVSDKDVLLEVQCRWEELLMTRVFDAIKSLHLDVLSVQASAPDGFMGLKIRAQFAGSGAVVPWMISEALRKAIGKR.

Disordered regions lie at residues 402-422 (ATGA…MSER) and 468-524 (LESS…PVLT). A bHLH domain is found at 412-461 (TGTKNHVMSERKRREKLNEMFLVLKSLLPSIHRVNKASILAETIAYLKEL). Residues 481–495 (TTTRLITRPSRGNNE) are compositionally biased toward polar residues. Over residues 508–519 (KSPELGRDDVER) the composition is skewed to basic and acidic residues.

The protein belongs to the bHLH protein family. In terms of assembly, efficient DNA binding requires dimerization with another bHLH protein.

The protein localises to the nucleus. In terms of biological role, putative transcriptional activator. Controls tissue-specific synthesis of anthocyanin pigments in various parts of the maize plant. This chain is Anthocyanin regulatory Lc protein (LC), found in Zea mays (Maize).